A 276-amino-acid polypeptide reads, in one-letter code: NADPH-dependent 7-cyano-7-deazaguanine reductase (276 aa).

Residue 83 to 85 (IES) participates in substrate binding. 85–86 (SK) provides a ligand contact to NADPH. The active-site Thioimide intermediate is the Cys-184. The Proton donor role is filled by Asp-191. 223–224 (HE) contacts substrate. 252-253 (RG) is an NADPH binding site.

It belongs to the GTP cyclohydrolase I family. QueF type 2 subfamily. In terms of assembly, homodimer.

The protein resides in the cytoplasm. The enzyme catalyses 7-aminomethyl-7-carbaguanine + 2 NADP(+) = 7-cyano-7-deazaguanine + 2 NADPH + 3 H(+). Its pathway is tRNA modification; tRNA-queuosine biosynthesis. Its function is as follows. Catalyzes the NADPH-dependent reduction of 7-cyano-7-deazaguanine (preQ0) to 7-aminomethyl-7-deazaguanine (preQ1). The chain is NADPH-dependent 7-cyano-7-deazaguanine reductase from Pseudomonas paraeruginosa (strain DSM 24068 / PA7) (Pseudomonas aeruginosa (strain PA7)).